The following is a 311-amino-acid chain: MTPRKAAQRTVLLVVHTGRDEATETARRVKKIVGDNGIALRVLSAEAVDRGSLHLALDNMRAMGVDIEVVDADPHVAQGCELVLVLGGDGTFLRAAELARTARIPVLGVNLGRIGFLAEAEAEAIDVVLEHVIARSYRVEERLTLDIVVRQGGNIIDQGWALNEASLEKGPRLGVLGVVVEIEGRPVSTFGCDGVLVSTPTGSTAYAFSAGGPVLWPDLEAILVVPNNAHALFGRPMVTSPDATVAIELEANGNDALVFCDGRREMIIPAGGRLEVTRCATPVKWARLDSAPFTDRLVSKFRLPVTGWRGK.

Residue Asp89 is the Proton acceptor of the active site. Residues 89-90 (DG), Arg94, 163-164 (NE), Asp193, and 204-209 (TAYAFS) contribute to the NAD(+) site.

This sequence belongs to the NAD kinase family. Requires a divalent metal cation as cofactor.

It localises to the cytoplasm. The enzyme catalyses NAD(+) + ATP = ADP + NADP(+) + H(+). Its function is as follows. Involved in the regulation of the intracellular balance of NAD and NADP, and is a key enzyme in the biosynthesis of NADP. Catalyzes specifically the phosphorylation on 2'-hydroxyl of the adenosine moiety of NAD to yield NADP. This chain is NAD kinase, found in Mycobacterium leprae (strain Br4923).